Consider the following 176-residue polypeptide: Cytochrome b (176 aa).

Helical transmembrane passes span 33–53 (FGSL…FLAM), 77–98 (WLIR…FLHV), and 113–133 (WNIG…GYVL). 2 residues coordinate heme b: histidine 83 and histidine 97.

Belongs to the cytochrome b family. As to quaternary structure, the cytochrome bc1 complex contains 11 subunits: 3 respiratory subunits (MT-CYB, CYC1 and UQCRFS1), 2 core proteins (UQCRC1 and UQCRC2) and 6 low-molecular weight proteins (UQCRH/QCR6, UQCRB/QCR7, UQCRQ/QCR8, UQCR10/QCR9, UQCR11/QCR10 and a cleavage product of UQCRFS1). This cytochrome bc1 complex then forms a dimer. Requires heme b as cofactor.

The protein localises to the mitochondrion inner membrane. Functionally, component of the ubiquinol-cytochrome c reductase complex (complex III or cytochrome b-c1 complex) that is part of the mitochondrial respiratory chain. The b-c1 complex mediates electron transfer from ubiquinol to cytochrome c. Contributes to the generation of a proton gradient across the mitochondrial membrane that is then used for ATP synthesis. This chain is Cytochrome b (MT-CYB), found in Sciurus carolinensis (Eastern gray squirrel).